Here is a 408-residue protein sequence, read N- to C-terminus: Imidazolonepropionase (408 aa).

Residues His72 and His74 each contribute to the Fe(3+) site. Residues His72 and His74 each contribute to the Zn(2+) site. The 4-imidazolone-5-propanoate site is built by Arg81, Tyr144, and His177. Position 144 (Tyr144) interacts with N-formimidoyl-L-glutamate. Residue His242 coordinates Fe(3+). Zn(2+) is bound at residue His242. Gln245 is a binding site for 4-imidazolone-5-propanoate. Asp317 lines the Fe(3+) pocket. Position 317 (Asp317) interacts with Zn(2+). Residues Asn319 and Gly321 each contribute to the N-formimidoyl-L-glutamate site. Residue Thr322 participates in 4-imidazolone-5-propanoate binding.

This sequence belongs to the metallo-dependent hydrolases superfamily. HutI family. The cofactor is Zn(2+). Requires Fe(3+) as cofactor.

It localises to the cytoplasm. The enzyme catalyses 4-imidazolone-5-propanoate + H2O = N-formimidoyl-L-glutamate. It participates in amino-acid degradation; L-histidine degradation into L-glutamate; N-formimidoyl-L-glutamate from L-histidine: step 3/3. Functionally, catalyzes the hydrolytic cleavage of the carbon-nitrogen bond in imidazolone-5-propanoate to yield N-formimidoyl-L-glutamate. It is the third step in the universal histidine degradation pathway. The protein is Imidazolonepropionase of Aliivibrio fischeri (strain MJ11) (Vibrio fischeri).